The following is a 432-amino-acid chain: DEAD-box ATP-dependent RNA helicase 56 (432 aa).

A coiled-coil region spans residues 1-28 (MAEAEVKDNEVYEEDLVDYEEEVENGTD). Residues 51–79 (SGFRDFLLKPELLRAIQDCGFEHPSEVQH) carry the Q motif motif. The region spanning 82 to 255 (IPQAILGMDV…KKFMQDPMEI (174 aa)) is the Helicase ATP-binding domain. Residue 95 to 102 (AKSGMGKT) coordinates ATP. Positions 202-205 (DECD) match the DEAD box motif. Positions 283–428 (KLNDLLDALD…ELPEQIDTST (146 aa)) constitute a Helicase C-terminal domain.

The protein belongs to the DEAD box helicase family. DECD subfamily. As to quaternary structure, homodimer and heterodimer with AIP2. Interacts with API5.

Its subcellular location is the nucleus. It catalyses the reaction ATP + H2O = ADP + phosphate + H(+). Functionally, ATP-binding RNA helicase involved in pre-mRNA splicing. Required for the export of mRNA out of the nucleus. Required for tapetal programmed cell death (PCD) and degeneration during anther development. Forms dimer with AIP2 and binds the promoter region of the cysteine protease CP1. Can complement the yeast RNA helicase SUB2. Plants silencing AIP1 and AIP2 are male sterile. This is DEAD-box ATP-dependent RNA helicase 56 from Oryza sativa subsp. japonica (Rice).